Reading from the N-terminus, the 349-residue chain is Replication-associated protein (349 aa).

One can recognise a CRESS-DNA virus Rep endonuclease domain in the interval 9-118 (RLAARNIFLT…DGDYCESGQY (110 aa)). The RCR-1 signature appears at 16–19 (FLTY). A divalent metal cation contacts are provided by Glu-51, His-59, and His-61. An RCR-2 motif is present at residues 59 to 61 (HLH). Residue Tyr-105 is the For DNA cleavage activity of the active site. Positions 105-108 (YITK) match the RCR-3 motif. Asp-109 serves as a coordination point for a divalent metal cation. The segment at 141–151 (VEEALAIIRAG) is binding to RBR1. An oligomerization region spans residues 154–174 (KTFIVSYHNVRANIERLFTKA). Residue 220–227 (GDSRTGKT) coordinates ATP.

It belongs to the geminiviridae Rep protein family. In terms of assembly, homooligomer. Interacts with the replication enhancer protein (REn). Interacts with host retinoblastoma-related protein 1 (RBR1), and may thereby induce the transcription of host replicative enzymes even if the cell is not dividing anymore. Interacts with host PCNA. Interacts with host SCE1 protein. The cofactor is Mg(2+). It depends on Mn(2+) as a cofactor.

Its subcellular location is the host nucleus. In terms of biological role, essential for the replication of viral ssDNA. The closed circular ssDNA genome is first converted to a superhelical dsDNA. Rep binds a specific region at the genome origin of replication. It introduces an endonucleolytic nick within the conserved sequence 5'-TAATATTAC-3' in the intergenic region of the genome present in all geminiviruses, thereby initiating the rolling circle replication (RCR). Following cleavage, binds covalently to the 5'-phosphate of DNA as a tyrosyl ester. The cleavage gives rise to a free 3'-OH that serves as a primer for the cellular DNA polymerase. The polymerase synthesizes the (+) strand DNA by rolling circle mechanism. After one round of replication, a Rep-catalyzed nucleotidyl transfer reaction releases a circular single-stranded virus genome, thereby terminating the replication. Displays origin-specific DNA cleavage, nucleotidyl transferase, ATPase and helicase activities. The chain is Replication-associated protein from Cabbage leaf curl virus (isolate Jamaica) (CaLCuV).